Here is a 157-residue protein sequence, read N- to C-terminus: MIEINVYYKKWYSTIKKPKIFVKNVIKSSLINLNIYEYKPIISIVLANNILLQKLNYEYRNKNKPTNVLSFPYDKLNKKCNLGEIFLSLDTLIEESIDLNIPIEHHTCHMLIHGLLHILDYNHEEPLMQYIMESIEIKLLDKLGIRNPYVSRETIYP.

Residues histidine 113, histidine 117, and histidine 123 each contribute to the Zn(2+) site.

It belongs to the endoribonuclease YbeY family. Zn(2+) is required as a cofactor.

The protein localises to the cytoplasm. In terms of biological role, single strand-specific metallo-endoribonuclease involved in late-stage 70S ribosome quality control and in maturation of the 3' terminus of the 16S rRNA. This Ehrlichia ruminantium (strain Gardel) protein is Endoribonuclease YbeY.